We begin with the raw amino-acid sequence, 517 residues long: Crotonobetaine/carnitine--CoA ligase (517 aa).

This sequence belongs to the ATP-dependent AMP-binding enzyme family.

The enzyme catalyses 4-(trimethylamino)butanoate + ATP + CoA = 4-(trimethylamino)butanoyl-CoA + AMP + diphosphate. It catalyses the reaction crotonobetaine + ATP + CoA = crotonobetainyl-CoA + AMP + diphosphate. It carries out the reaction (R)-carnitine + ATP + CoA = (R)-carnitinyl-CoA + AMP + diphosphate. It participates in amine and polyamine metabolism; carnitine metabolism. Catalyzes the transfer of CoA to carnitine, generating the initial carnitinyl-CoA needed for the CaiB reaction cycle. Also has activity toward crotonobetaine and gamma-butyrobetaine. The sequence is that of Crotonobetaine/carnitine--CoA ligase from Salmonella agona (strain SL483).